The following is a 359-amino-acid chain: Type-1 angiotensin II receptor (359 aa).

Residues 1-25 are Extracellular-facing; it reads MILNSSTEDGIKRIQDDCPKAGRHN. The N-linked (GlcNAc...) asparagine glycan is linked to Asn4. Residues Gln15 and Asp17 each coordinate angiotensin II. Cystine bridges form between Cys18–Cys274 and Cys101–Cys180. A helical membrane pass occupies residues 26–55; sequence YIFVMIPTLYSIIFVVGIFGNSLVVIVIYF. Topologically, residues 56–61 are cytoplasmic; sequence YMKLKT. Residues 62 to 89 traverse the membrane as a helical segment; that stretch reads VASVFLLNLALADLCFLLTLPLWAVYTA. The Extracellular segment spans residues 90-98; it reads MEYRWPFGN. Residues 99–125 form a helical membrane-spanning segment; that stretch reads YLCKIASASVSFNLYASVFLLTCLSID. Over 126-141 the chain is Cytoplasmic; sequence RYVAIVHPMKSPVRRT. A helical membrane pass occupies residues 142 to 165; the sequence is MLMAKVTCIIIWLLAGLASLPTII. Residues 166–190 are Extracellular-facing; sequence HRNVFFIENTNITVCAFHYESQNST. An angiotensin II-binding site is contributed by Arg167. Residue Asn176 is glycosylated (N-linked (GlcNAc...) asparagine). Residues Phe182, His183, and Tyr184 each contribute to the angiotensin II site. Asn188 carries an N-linked (GlcNAc...) asparagine glycan. The chain crosses the membrane as a helical span at residues 191–216; that stretch reads LPIGLGLTKNILGFLFPFLIILTSYT. Position 199 (Lys199) interacts with angiotensin II. At 217 to 239 the chain is on the cytoplasmic side; it reads LIWKTLKRAYEIQKNKPRNDDIF. Residues 240-268 form a helical membrane-spanning segment; that stretch reads KIIMAIVLFFFFSWVPHQIFTFLDVLIQL. Residues 269–278 are Extracellular-facing; the sequence is GIIHDCKIAD. Residues 279 to 304 traverse the membrane as a helical segment; the sequence is IVDTAMPITICIAYFNNCLNPLFYGF. The Cytoplasmic segment spans residues 305–359; sequence LGKKFKKYFLQLLKYIPPKAKSHSSLSTKMSTLSYRPSDHGNASTKKSASCVEVE. The segment covering 335-352 has biased composition (polar residues); sequence STLSYRPSDHGNASTKKS. Positions 335–359 are disordered; that stretch reads STLSYRPSDHGNASTKKSASCVEVE. Cys355 carries the S-palmitoyl cysteine lipid modification.

Belongs to the G-protein coupled receptor 1 family. As to quaternary structure, interacts with MAS1. Interacts with ARRB1. Interacts with FLNA (via filamin repeat 21); increases PKA-mediated phosphorylation of FLNA. C-terminal Ser or Thr residues may be phosphorylated. In terms of tissue distribution, adrenal, liver, aorta, kidney, lung, testis and heart.

The protein resides in the cell membrane. Its function is as follows. Receptor for angiotensin II, a vasoconstricting peptide, which acts as a key regulator of blood pressure and sodium retention by the kidney. The activated receptor in turn couples to G-alpha proteins G(q) (GNAQ, GNA11, GNA14 or GNA15) and thus activates phospholipase C and increases the cytosolic Ca(2+) concentrations, which in turn triggers cellular responses such as stimulation of protein kinase C. The chain is Type-1 angiotensin II receptor (AGTR1) from Canis lupus familiaris (Dog).